We begin with the raw amino-acid sequence, 51 residues long: ATP synthase F(1) complex subunit epsilon, mitochondrial (51 aa).

3 positions are modified to N6-acetyllysine; alternate: Lys21, Lys32, and Lys37. N6-succinyllysine; alternate occurs at positions 21, 32, and 37. Lys44 bears the N6-acetyllysine mark.

This sequence belongs to the eukaryotic ATPase epsilon family. As to quaternary structure, component of the ATP synthase complex composed at least of ATP5F1A/subunit alpha, ATP5F1B/subunit beta, ATP5MC1/subunit c (homooctomer), MT-ATP6/subunit a, MT-ATP8/subunit 8, ATP5ME/subunit e, ATP5MF/subunit f, ATP5MG/subunit g, ATP5MK/subunit k, ATP5MJ/subunit j, ATP5F1C/subunit gamma, ATP5F1D/subunit delta, ATP5F1E/subunit epsilon, ATP5PF/subunit F6, ATP5PB/subunit b, ATP5PD/subunit d, ATP5PO/subunit OSCP. ATP synthase complex consists of a soluble F(1) head domain (subunits alpha(3) and beta(3)) - the catalytic core - and a membrane F(0) domain - the membrane proton channel (subunits c, a, 8, e, f, g, k and j). These two domains are linked by a central stalk (subunits gamma, delta, and epsilon) rotating inside the F1 region and a stationary peripheral stalk (subunits F6, b, d, and OSCP). In terms of tissue distribution, ubiquitous.

The protein localises to the mitochondrion. It is found in the mitochondrion inner membrane. In terms of biological role, subunit epsilon, of the mitochondrial membrane ATP synthase complex (F(1)F(0) ATP synthase or Complex V) that produces ATP from ADP in the presence of a proton gradient across the membrane which is generated by electron transport complexes of the respiratory chain. ATP synthase complex consist of a soluble F(1) head domain - the catalytic core - and a membrane F(1) domain - the membrane proton channel. These two domains are linked by a central stalk rotating inside the F(1) region and a stationary peripheral stalk. During catalysis, ATP synthesis in the catalytic domain of F(1) is coupled via a rotary mechanism of the central stalk subunits to proton translocation. In vivo, can only synthesize ATP although its ATP hydrolase activity can be activated artificially in vitro. May be essential for the assembly of F(1) and may play an important role in the incorporation of the hydrophobic subunit c into the F(1)-c oligomer rotor of the mitochondrial ATP synthase complex. This chain is ATP synthase F(1) complex subunit epsilon, mitochondrial, found in Homo sapiens (Human).